The sequence spans 123 residues: Phospholipase A2 (123 aa).

7 disulfides stabilise this stretch: cysteine 11/cysteine 77, cysteine 27/cysteine 123, cysteine 29/cysteine 45, cysteine 44/cysteine 105, cysteine 51/cysteine 98, cysteine 61/cysteine 91, and cysteine 84/cysteine 96. Tyrosine 28, glycine 30, and glycine 32 together coordinate Ca(2+). The active site involves histidine 48. Aspartate 49 is a binding site for Ca(2+). Aspartate 99 is a catalytic residue.

The protein belongs to the phospholipase A2 family. As to quaternary structure, monomer or homodimer. The cofactor is Ca(2+). In terms of processing, activated by trypsin cleavage in the duodenum. Can also be activated by thrombin or autocatalytically.

Its subcellular location is the secreted. The catalysed reaction is a 1,2-diacyl-sn-glycero-3-phosphocholine + H2O = a 1-acyl-sn-glycero-3-phosphocholine + a fatty acid + H(+). It catalyses the reaction 1,2-ditetradecanoyl-sn-glycero-3-phosphocholine + H2O = 1-tetradecanoyl-sn-glycero-3-phosphocholine + tetradecanoate + H(+). It carries out the reaction 1,2-dihexadecanoyl-sn-glycero-3-phosphocholine + H2O = 1-hexadecanoyl-sn-glycero-3-phosphocholine + hexadecanoate + H(+). The enzyme catalyses 1-hexadecanoyl-2-(9Z-octadecenoyl)-sn-glycero-3-phosphocholine + H2O = 1-hexadecanoyl-sn-glycero-3-phosphocholine + (9Z)-octadecenoate + H(+). The catalysed reaction is 1-hexadecanoyl-2-(5Z,8Z,11Z,14Z-eicosatetraenoyl)-sn-glycero-3-phosphocholine + H2O = 1-hexadecanoyl-sn-glycero-3-phosphocholine + (5Z,8Z,11Z,14Z)-eicosatetraenoate + H(+). It catalyses the reaction 1-hexadecanoyl-2-(9Z-octadecenoyl)-sn-glycero-3-phospho-(1'-sn-glycerol) + H2O = 1-hexadecanoyl-sn-glycero-3-phospho-(1'-sn-glycerol) + (9Z)-octadecenoate + H(+). It carries out the reaction N-hexadecanoyl-1,2-di-(9Z-octadecenoyl)-sn-glycero-3-phosphoethanolamine + H2O = N-hexadecanoyl-1-(9Z-octadecenoyl)-sn-glycero-3-phosphoethanolamine + (9Z)-octadecenoate + H(+). The enzyme catalyses 1-hexadecanoyl-2-(9Z,12Z-octadecadienoyl)-sn-glycero-3-phosphoethanolamine + H2O = 1-hexadecanoyl-sn-glycero-3-phosphoethanolamine + (9Z,12Z)-octadecadienoate + H(+). The catalysed reaction is N,1-dihexadecanoyl-2-(9Z,12Z-octadecadienoyl)-sn-glycero-3-phosphoethanolamine + H2O = N,1-dihexadecanoyl-sn-glycero-3-phosphoethanolamine + (9Z,12Z)-octadecadienoate + H(+). Its function is as follows. Secretory calcium-dependent phospholipase A2 that primarily targets dietary phospholipids in the intestinal tract. Hydrolyzes the ester bond of the fatty acyl group attached at sn-2 position of phospholipids (phospholipase A2 activity) with preference for phosphatidylethanolamines and phosphatidylglycerols over phosphatidylcholines. May play a role in the biosynthesis of N-acyl ethanolamines that regulate energy metabolism and inflammation in the intestinal tract. Hydrolyzes N-acyl phosphatidylethanolamines to N-acyl lysophosphatidylethanolamines, which are further cleaved by a lysophospholipase D to release N-acyl ethanolamines. May act in an autocrine and paracrine manner. Has anti-helminth activity in a process regulated by gut microbiota. Upon helminth infection of intestinal epithelia, directly affects phosphatidylethanolamine contents in the membrane of helminth larvae, likely controlling an array of phospholipid-mediated cellular processes such as membrane fusion and cell division while providing for better immune recognition, ultimately reducing larvae integrity and infectivity. The sequence is that of Phospholipase A2 (PLA2G1B) from Ovis aries (Sheep).